The chain runs to 808 residues: MAQISLHGTLHVTIYEVDKLHSGGGPHFFRKLVENIEETVGFGKGVSKLYATIDLEKARVGRTRILENEQSNPRWYESFHVYCAHQASNVIFTVKDDNPIGATLIGRAYVPVEELLDGEEIDRWVEILDEDKNPVHSGSKIHVKLQYFEVTKDRNWGQGIRSSKYPGVPYTYFSQRQGCKVSLYQDAHIPDKFVPQIPLAGGNYYEPHRCWEDVFDAITNAKHLIYITGWSVYTEISLIRDSRRPKPGGDITLGELLKKKASEGVRVLMLVWDDRTSVGLLKKDGLMATHDEETEHFFQNTDVHCVLCPRNPDDGGSFVQDLQISTMFTHHQKIVVVDSAMPNGDSQRRRIVSFVGGLDLCDGRYDSPFHSLFRTLDSAHHDDFHQPNFAGASIEKGGPREPWHDIHSRLEGPIAWDVLFNFEQRWRKQGGKDLLIQLRELEDVIIPPSPVMYPDDFEAWNVQLFRSIDGGAAFGFPETPEDAPEAGLVSGKDNIIDRSIQDAYIHAIRRAKNFIYIENQYFLGSSFGWSPDGIKPEDINALHLIPKELSLKILSKIAAGERFTVYIVVPMWPEGIPESASVQAILDWQKRTMEMMYKDIVQALKANGIIEDPRNYLTFFCLGNREVKKSGEYEPAEKPEPDTDYIRAQEARRFMIYVHTKMMIVDDEYIIIGSANINQRSMDGARDSEIAMGAYQPHHLSTRQPARGQIHGFRMSLWYEHLGMLDESFLNPESEECVRKVNQMAEKYWDLYSSETLEHDLPGHLLRYPIGVASEGDVTELPGTEFFPDTKARVLGAKSDYLPPILTT.

A propeptide spanning residues 1 to 30 (MAQISLHGTLHVTIYEVDKLHSGGGPHFFR) is cleaved from the precursor. Residues 1–125 (MAQISLHGTL…LDGEEIDRWV (125 aa)) enclose the C2 domain. Asp186 contacts Ca(2+). The PLD phosphodiesterase 1 domain maps to 326 to 364 (TMFTHHQKIVVVDSAMPNGDSQRRRIVSFVGGLDLCDGR). Catalysis depends on residues His331, Lys333, and Asp338. His331 is an a 1,2-diacyl-sn-glycero-3-phosphate binding site. Ca(2+) is bound by residues His370 and His404. Residues Gln520 and His659 each contribute to the a 1,2-diacyl-sn-glycero-3-phosphate site. A PLD phosphodiesterase 2 domain is found at 654–681 (FMIYVHTKMMIVDDEYIIIGSANINQRS). Residues His659, Lys661, and Asp666 contribute to the active site. Glu720 lines the Ca(2+) pocket.

Belongs to the phospholipase D family. C2-PLD subfamily. Ca(2+) is required as a cofactor. Expression is higher in radicle than in endosperm.

It is found in the cytoplasm. The protein resides in the membrane. The protein localises to the vacuole. Its subcellular location is the endoplasmic reticulum. It localises to the plastid. It is found in the cell membrane. It carries out the reaction a 1,2-diacyl-sn-glycero-3-phosphocholine + H2O = a 1,2-diacyl-sn-glycero-3-phosphate + choline + H(+). Hydrolyzes glycerol-phospholipids at the terminal phosphodiesteric bond. Plays an important role in various cellular processes, including phytohormone action, vesicular trafficking, secretion, cytoskeletal arrangement, meiosis, tumor promotion, pathogenesis, membrane deterioration and senescence. This Ricinus communis (Castor bean) protein is Phospholipase D alpha 1 (PLD1).